Here is a 240-residue protein sequence, read N- to C-terminus: Ubiquitin domain-containing protein 1 (240 aa).

The tract at residues 1-48 is disordered; sequence MGGCVGRPQGESQRSQSRASGQQRKRAGRNEPLKKERPRWKSDYPMTD. Residues 12 to 22 are compositionally biased toward low complexity; that stretch reads SQRSQSRASGQ. Over residues 28–42 the composition is skewed to basic and acidic residues; it reads GRNEPLKKERPRWKS. The region spanning 153-228 is the Ubiquitin-like domain; sequence FQLKVRLSTG…DTSYCKPATR (76 aa).

Its function is as follows. May be involved in the regulation of cellular senescence through a positive feedback loop with TP53. In Xenopus tropicalis (Western clawed frog), this protein is Ubiquitin domain-containing protein 1 (ubtd1).